The chain runs to 100 residues: Small ribosomal subunit protein uS14 (100 aa).

Belongs to the universal ribosomal protein uS14 family. Part of the 30S ribosomal subunit. Contacts proteins S3 and S10.

Its function is as follows. Binds 16S rRNA, required for the assembly of 30S particles and may also be responsible for determining the conformation of the 16S rRNA at the A site. The protein is Small ribosomal subunit protein uS14 of Synechococcus sp. (strain CC9311).